A 216-amino-acid polypeptide reads, in one-letter code: Cytidylate kinase (216 aa).

ATP is bound at residue 7–15 (GPSGTGKST).

Belongs to the cytidylate kinase family. Type 1 subfamily.

It is found in the cytoplasm. The catalysed reaction is CMP + ATP = CDP + ADP. It carries out the reaction dCMP + ATP = dCDP + ADP. The chain is Cytidylate kinase from Chlamydia pneumoniae (Chlamydophila pneumoniae).